Consider the following 475-residue polypeptide: E3 ubiquitin-protein ligase TRIM21 (475 aa).

The RING-type zinc-finger motif lies at 16 to 55; that stretch reads CPICLDPFVEPVSIECGHSFCQECISQVGKGGGSVCPVCR. Positions 92, 95, 114, and 120 each coordinate Zn(2+). Residues 92–123 form a B box-type zinc finger; it reads CAVHGERLHLFCEKDGKALCWVCAQSRKHRDH. The stretch at 128–238 forms a coiled coil; the sequence is LEEAAQEYQE…ISELDRRCHS (111 aa). Phosphoserine is present on Ser-266. In terms of domain architecture, B30.2/SPRY spans 268–465; it reads ELRSVCHVPG…NTAPLTLCPL (198 aa).

It belongs to the TRIM/RBCC family. Homotrimer. Interacts (via C-terminus) with IRF8 (via C-terminus). Component of a SCF(SKP2)-like complex containing CUL1, SKP1, TRIM21 and SKP2. Interacts with CALR, CUL1, FBXW11, HSPA5, IKBKB, IRF3, SKP1 and VCP. Interacts with SKP2; the interaction with SKP2 does not depend on an intact F-box domain. Interacts (via N-terminus and C-terminus) with DCP2 (via N-terminus and C-terminus). Interacts with ULK1, BECN1 and with ATG8 family members, including GABARAP, GABARAPL1, GABARAPL2 and MAP1LC3C/LC3C. Interacts with TRIM21 and SQSTM1/sequestosome 1. Interacts with IRF3. Interacts (via the SPRY domain) with NMI (via coiled-coil domain); the interaction promotes 'Lys-63'-linked ubiquitination of NMI. Interacts with IFI35 and NMI; the interaction facilitates NMI-IFI35 complex formation. As to quaternary structure, (Microbial infection) Interacts (via B30.2/SPRY domain) with severe fever with thrombocytopenia syndrome virus (SFTSV) NSs; this interaction activates NFE2L2-mediated transcriptional activation of antioxidant genes. Post-translationally, autoubiquitinated; does not lead to its proteasomal degradation. Deubiquitinated by USP4; leading to its stabilization. In terms of tissue distribution, isoform 1 and isoform 2 are expressed in fetal and adult heart and fetal lung.

It localises to the cytoplasm. Its subcellular location is the cytoplasmic vesicle. It is found in the autophagosome. The protein resides in the nucleus. The protein localises to the P-body. It localises to the stress granule. The catalysed reaction is S-ubiquitinyl-[E2 ubiquitin-conjugating enzyme]-L-cysteine + [acceptor protein]-L-lysine = [E2 ubiquitin-conjugating enzyme]-L-cysteine + N(6)-ubiquitinyl-[acceptor protein]-L-lysine.. It participates in protein modification; protein ubiquitination. In terms of biological role, E3 ubiquitin-protein ligase whose activity is dependent on E2 enzymes, UBE2D1, UBE2D2, UBE2E1 and UBE2E2. Forms a ubiquitin ligase complex in cooperation with the E2 UBE2D2 that is used not only for the ubiquitination of USP4 and IKBKB but also for its self-ubiquitination. Component of cullin-RING-based SCF (SKP1-CUL1-F-box protein) E3 ubiquitin-protein ligase complexes such as SCF(SKP2)-like complexes. A TRIM21-containing SCF(SKP2)-like complex is shown to mediate ubiquitination of CDKN1B ('Thr-187' phosphorylated-form), thereby promoting its degradation by the proteasome. Monoubiquitinates IKBKB that will negatively regulates Tax-induced NF-kappa-B signaling. Negatively regulates IFN-beta production post-pathogen recognition by catalyzing polyubiquitin-mediated degradation of IRF3. Mediates the ubiquitin-mediated proteasomal degradation of IgG1 heavy chain, which is linked to the VCP-mediated ER-associated degradation (ERAD) pathway. Promotes IRF8 ubiquitination, which enhanced the ability of IRF8 to stimulate cytokine genes transcription in macrophages. Plays a role in the regulation of the cell cycle progression. Enhances the decapping activity of DCP2. Exists as a ribonucleoprotein particle present in all mammalian cells studied and composed of a single polypeptide and one of four small RNA molecules. At least two isoforms are present in nucleated and red blood cells, and tissue specific differences in RO/SSA proteins have been identified. The common feature of these proteins is their ability to bind HY RNAs.2. Involved in the regulation of innate immunity and the inflammatory response in response to IFNG/IFN-gamma. Organizes autophagic machinery by serving as a platform for the assembly of ULK1, Beclin 1/BECN1 and ATG8 family members and recognizes specific autophagy targets, thus coordinating target recognition with assembly of the autophagic apparatus and initiation of autophagy. Also regulates autophagy through FIP200/RB1CC1 ubiquitination and subsequent decreased protein stability. Represses the innate antiviral response by facilitating the formation of the NMI-IFI35 complex through 'Lys-63'-linked ubiquitination of NMI. During viral infection, promotes cell pyroptosis by mediating 'Lys-6'-linked ubiquitination of ISG12a/IFI27, facilitating its translocation into the mitochondria and subsequent CASP3 activation. When up-regulated through the IFN/JAK/STAT signaling pathway, promotes 'Lys-27'-linked ubiquitination of MAVS, leading to the recruitment of TBK1 and up-regulation of innate immunity. Mediates 'Lys-63'-linked polyubiquitination of G3BP1 in response to heat shock, leading to stress granule disassembly. The sequence is that of E3 ubiquitin-protein ligase TRIM21 from Homo sapiens (Human).